The chain runs to 458 residues: MFGTLRIGSEKNSVEFIEHAKGEAASRLGGYVFSHSACESCRLKKLRCSGHKSGCDRCRSQAMKCSYQIGAPSNSSRPKSRSHFQPNFSNMSGTAGTSKAPSPLGNDGVDREIGGWEMAETDPTGSVVTTTAQFLNSVNQGEHSNLNDLRQGQRFGGELDYSENELNDIFSNIAYLQPDDMETNVFVGAANRAVLDAEAFDSMTEPANSMSDDIGDIAASQPPSADVQSAFMAFDHARTSSSSSSHQSSDTSASDAFIATDFDGARSRTDPSTCQCRGSILRVLAEIESNILSASPSNMYAILSYLRQTTAASNDILTCRICNCRLKFFGLLGIIGEKITSLSGAIITAFVCRLKEQNESVDFGKSDSPDKRLDPNRAIQLCEFQVQSLQEFKVVSAAVIKLQLKYSVAFVSRTRELAISMNHLAQAQSLEKLESRLNELVIKMQRMVSEVDSDLCDI.

Residues 38 to 65 (CESCRLKKLRCSGHKSGCDRCRSQAMKC) constitute a DNA-binding region (zn(2)-C6 fungal-type). The tract at residues 69-109 (IGAPSNSSRPKSRSHFQPNFSNMSGTAGTSKAPSPLGNDGV) is disordered. Residues 71–100 (APSNSSRPKSRSHFQPNFSNMSGTAGTSKA) are compositionally biased toward polar residues.

Its subcellular location is the nucleus. In terms of biological role, transcription factor that specifically regulates the expression of the gene cluster that mediates the biosynthesis of PR-toxin, a bicyclic sesquiterpene belonging to the eremophilane class and acting as a mycotoxin. This is Transcription factor ORF10 from Penicillium roqueforti (strain FM164).